The primary structure comprises 349 residues: UDP-3-O-acylglucosamine N-acyltransferase 1 (349 aa).

Histidine 241 acts as the Proton acceptor in catalysis.

This sequence belongs to the transferase hexapeptide repeat family. LpxD subfamily. As to quaternary structure, homotrimer.

The enzyme catalyses a UDP-3-O-[(3R)-3-hydroxyacyl]-alpha-D-glucosamine + a (3R)-hydroxyacyl-[ACP] = a UDP-2-N,3-O-bis[(3R)-3-hydroxyacyl]-alpha-D-glucosamine + holo-[ACP] + H(+). It participates in bacterial outer membrane biogenesis; LPS lipid A biosynthesis. Catalyzes the N-acylation of UDP-3-O-acylglucosamine using 3-hydroxyacyl-ACP as the acyl donor. Is involved in the biosynthesis of lipid A, a phosphorylated glycolipid that anchors the lipopolysaccharide to the outer membrane of the cell. The protein is UDP-3-O-acylglucosamine N-acyltransferase 1 of Gloeobacter violaceus (strain ATCC 29082 / PCC 7421).